The chain runs to 79 residues: Acyl carrier protein (79 aa).

One can recognise a Carrier domain in the interval 2–77 (SDIEARVKKI…NAVDYATKNQ (76 aa)). Serine 37 carries the post-translational modification O-(pantetheine 4'-phosphoryl)serine.

The protein belongs to the acyl carrier protein (ACP) family. 4'-phosphopantetheine is transferred from CoA to a specific serine of apo-ACP by AcpS. This modification is essential for activity because fatty acids are bound in thioester linkage to the sulfhydryl of the prosthetic group.

The protein localises to the cytoplasm. Its pathway is lipid metabolism; fatty acid biosynthesis. Functionally, carrier of the growing fatty acid chain in fatty acid biosynthesis. The protein is Acyl carrier protein of Variovorax paradoxus (strain S110).